Here is a 247-residue protein sequence, read N- to C-terminus: Large ribosomal subunit protein uL30z (247 aa).

The protein belongs to the universal ribosomal protein uL30 family.

The polypeptide is Large ribosomal subunit protein uL30z (RPL7A) (Arabidopsis thaliana (Mouse-ear cress)).